Reading from the N-terminus, the 136-residue chain is Small ribosomal subunit protein eS17A (136 aa).

This sequence belongs to the eukaryotic ribosomal protein eS17 family. Component of the small ribosomal subunit (SSU). Mature yeast ribosomes consist of a small (40S) and a large (60S) subunit. The 40S small subunit contains 1 molecule of ribosomal RNA (18S rRNA) and 33 different proteins (encoded by 57 genes). The large 60S subunit contains 3 rRNA molecules (25S, 5.8S and 5S rRNA) and 46 different proteins (encoded by 81 genes).

The protein localises to the cytoplasm. Functionally, component of the ribosome, a large ribonucleoprotein complex responsible for the synthesis of proteins in the cell. The small ribosomal subunit (SSU) binds messenger RNAs (mRNAs) and translates the encoded message by selecting cognate aminoacyl-transfer RNA (tRNA) molecules. The large subunit (LSU) contains the ribosomal catalytic site termed the peptidyl transferase center (PTC), which catalyzes the formation of peptide bonds, thereby polymerizing the amino acids delivered by tRNAs into a polypeptide chain. The nascent polypeptides leave the ribosome through a tunnel in the LSU and interact with protein factors that function in enzymatic processing, targeting, and the membrane insertion of nascent chains at the exit of the ribosomal tunnel. This Saccharomyces cerevisiae (strain ATCC 204508 / S288c) (Baker's yeast) protein is Small ribosomal subunit protein eS17A.